The chain runs to 992 residues: Vacuolar membrane protease (992 aa).

The Cytoplasmic segment spans residues 1-24; the sequence is MSPAMANPRVRKFNPIAFTPLPVT. A helical transmembrane segment spans residues 25–45; it reads FITTIVYLAVLILVLVTYLVV. Residues 46 to 390 lie on the Vacuolar side of the membrane; that stretch reads PPAPTLEMSP…SAFAVFRLHT (345 aa). Residues N59, N115, and N118 are each glycosylated (N-linked (GlcNAc...) asparagine). 2 residues coordinate Zn(2+): H174 and D186. E220 serves as the catalytic Proton acceptor. E221 serves as a coordination point for Zn(2+). N237 carries an N-linked (GlcNAc...) asparagine glycan. Residues E246 and H319 each coordinate Zn(2+). A helical membrane pass occupies residues 391–411; that stretch reads LFALSVTLLVIGPLVLFITSI. The Cytoplasmic portion of the chain corresponds to 412 to 446; the sequence is ALSKTDRMYLFSMSKSLGGASETVSLRGLRGLFRT. The helical transmembrane segment at 447 to 467 threads the bilayer; that stretch reads PIILTVTTVISIGLAYLLEKI. The Vacuolar segment spans residues 468 to 474; the sequence is NPYIVHS. The chain crosses the membrane as a helical span at residues 475–495; that stretch reads SQFAVWSMMLSVWIFVAWFLA. At 496 to 508 the chain is on the cytoplasmic side; the sequence is RVADFFRPSALHR. A helical transmembrane segment spans residues 509–529; the sequence is AYSYTWIFIVTWIMLVISTVY. Residues 530-533 are Vacuolar-facing; that stretch reads ANQK. Residues 534 to 554 traverse the membrane as a helical segment; it reads GIAAGYFTFFYFAAVFLATWV. Residues 555 to 671 lie on the Cytoplasmic side of the membrane; that stretch reads SYLELFSLPR…WSWTLPRWTW (117 aa). Positions 579–620 are disordered; it reads RSSSLSSRLLTPSADELPSDIGPNGAENVGDPDETDPTESTS. The helical transmembrane segment at 672-692 threads the bilayer; sequence ILQLLLLAPIVIILVGQVGLL. The Vacuolar segment spans residues 693-708; the sequence is LTTAMSQIGSDGVSTF. Residues 709–729 traverse the membrane as a helical segment; the sequence is IVYLACALFSTLLFAPLLPFI. Topologically, residues 730–736 are cytoplasmic; the sequence is HRFTYHV. Residues 737 to 757 traverse the membrane as a helical segment; it reads PIFLLLIFIGTLIYNLVAFPF. The Vacuolar segment spans residues 758 to 992; sequence SPANRLKIFF…VEASHDFIIQ (235 aa). N805, N846, and N954 each carry an N-linked (GlcNAc...) asparagine glycan.

It belongs to the peptidase M28 family. Zn(2+) is required as a cofactor.

It localises to the vacuole membrane. Functionally, may be involved in vacuolar sorting and osmoregulation. The sequence is that of Vacuolar membrane protease from Paracoccidioides brasiliensis (strain Pb18).